The primary structure comprises 158 residues: Low molecular weight phosphotyrosine protein phosphatase (158 aa).

Residue A2 is modified to N-acetylalanine. The Nucleophile role is filled by C13. R19 is a catalytic residue. D130 serves as the catalytic Proton donor. Residues Y132 and Y133 each carry the phosphotyrosine modification.

It belongs to the low molecular weight phosphotyrosine protein phosphatase family.

Its subcellular location is the cytoplasm. The catalysed reaction is O-phospho-L-tyrosyl-[protein] + H2O = L-tyrosyl-[protein] + phosphate. It carries out the reaction a phosphate monoester + H2O = an alcohol + phosphate. Functionally, acts on tyrosine phosphorylated proteins, low-MW aryl phosphates and natural and synthetic acyl phosphates. This is Low molecular weight phosphotyrosine protein phosphatase (ACP1) from Gallus gallus (Chicken).